Here is a 283-residue protein sequence, read N- to C-terminus: ATP phosphoribosyltransferase (283 aa).

It belongs to the ATP phosphoribosyltransferase family. Long subfamily. Requires Mg(2+) as cofactor.

The protein localises to the cytoplasm. It catalyses the reaction 1-(5-phospho-beta-D-ribosyl)-ATP + diphosphate = 5-phospho-alpha-D-ribose 1-diphosphate + ATP. It functions in the pathway amino-acid biosynthesis; L-histidine biosynthesis; L-histidine from 5-phospho-alpha-D-ribose 1-diphosphate: step 1/9. Its activity is regulated as follows. Feedback inhibited by histidine. Its function is as follows. Catalyzes the condensation of ATP and 5-phosphoribose 1-diphosphate to form N'-(5'-phosphoribosyl)-ATP (PR-ATP). Has a crucial role in the pathway because the rate of histidine biosynthesis seems to be controlled primarily by regulation of HisG enzymatic activity. The protein is ATP phosphoribosyltransferase of Bifidobacterium longum subsp. infantis (strain ATCC 15697 / DSM 20088 / JCM 1222 / NCTC 11817 / S12).